The sequence spans 754 residues: 5-methyltetrahydropteroyltriglutamate--homocysteine methyltransferase (754 aa).

5-methyltetrahydropteroyltri-L-glutamate-binding positions include 17-20 (RELK) and K117. Residues 431 to 433 (IGS) and E484 contribute to the L-homocysteine site. Residues 431–433 (IGS) and E484 contribute to the L-methionine site. 5-methyltetrahydropteroyltri-L-glutamate is bound by residues 515 to 516 (RC) and W561. D599 lines the L-homocysteine pocket. Position 599 (D599) interacts with L-methionine. 5-methyltetrahydropteroyltri-L-glutamate is bound at residue E605. Zn(2+) is bound by residues H641, C643, and E665. H694 acts as the Proton donor in catalysis. C726 is a Zn(2+) binding site.

The protein belongs to the vitamin-B12 independent methionine synthase family. The cofactor is Zn(2+).

The catalysed reaction is 5-methyltetrahydropteroyltri-L-glutamate + L-homocysteine = tetrahydropteroyltri-L-glutamate + L-methionine. Its pathway is amino-acid biosynthesis; L-methionine biosynthesis via de novo pathway; L-methionine from L-homocysteine (MetE route): step 1/1. Catalyzes the transfer of a methyl group from 5-methyltetrahydrofolate to homocysteine resulting in methionine formation. This chain is 5-methyltetrahydropteroyltriglutamate--homocysteine methyltransferase, found in Salmonella enteritidis PT4 (strain P125109).